We begin with the raw amino-acid sequence, 2273 residues long: Linear gramicidin synthase subunit A (2273 aa).

The interval 1–144 is GART; it reads MRILFLTTFM…AIEELFIREW (144 aa). 2 Carrier domains span residues 693–767 and 1724–1798; these read APTD…TEQK and APRT…TSEQ. O-(pantetheine 4'-phosphoryl)serine occurs at positions 728 and 1759.

This sequence belongs to the ATP-dependent AMP-binding enzyme family. As to quaternary structure, large multienzyme complex composed of 4 subunits; LgrA, LgrB, LgrC and LgrD. Pantetheine 4'-phosphate serves as cofactor.

Its function is as follows. Activates valine (or leucine, but much less frequently), and then glycine and catalyzes the formation of the peptide bond in the first step of peptide synthesis. This enzyme may also play a role in N-formylation of the first amino acid residue in the synthesized dipeptide. This Brevibacillus parabrevis protein is Linear gramicidin synthase subunit A (lgrA).